A 103-amino-acid polypeptide reads, in one-letter code: Large ribosomal subunit protein bL21 (103 aa).

This sequence belongs to the bacterial ribosomal protein bL21 family. As to quaternary structure, part of the 50S ribosomal subunit. Contacts protein L20.

In terms of biological role, this protein binds to 23S rRNA in the presence of protein L20. The polypeptide is Large ribosomal subunit protein bL21 (Tolumonas auensis (strain DSM 9187 / NBRC 110442 / TA 4)).